The chain runs to 68 residues: Sec-independent protein translocase protein TatA (68 aa).

A helical transmembrane segment spans residues 1-21 (MGSFSIWHWLIVLAVVLLLFG). The interval 48-68 (AAAADKSIDGKTVDHKSDEVR) is disordered. A compositionally biased stretch (basic and acidic residues) spans 53-68 (KSIDGKTVDHKSDEVR).

The protein belongs to the TatA/E family. As to quaternary structure, the Tat system comprises two distinct complexes: a TatABC complex, containing multiple copies of TatA, TatB and TatC subunits, and a separate TatA complex, containing only TatA subunits. Substrates initially bind to the TatABC complex, which probably triggers association of the separate TatA complex to form the active translocon.

The protein resides in the cell inner membrane. Its function is as follows. Part of the twin-arginine translocation (Tat) system that transports large folded proteins containing a characteristic twin-arginine motif in their signal peptide across membranes. TatA could form the protein-conducting channel of the Tat system. In Sinorhizobium medicae (strain WSM419) (Ensifer medicae), this protein is Sec-independent protein translocase protein TatA.